Consider the following 670-residue polypeptide: Eukaryotic translation initiation factor 3 subunit B (670 aa).

The 87-residue stretch at 30-116 (KFIVVDNIPV…HTLKVNLLDD (87 aa)) folds into the RRM domain. 4 WD repeats span residues 183–221 (SVSLTSSYVQWSNTGSYLVTFHPDGIALYGGKDWIQVNL), 222–269 (FEHR…KLRS), 466–507 (LENR…SYGT), and 509–553 (EHLQ…VYSV). The stretch at 568-600 (KFMLTNKEINQIKQNIKKYQEKFDKQDEDDNKA) forms a coiled coil.

This sequence belongs to the eIF-3 subunit B family. As to quaternary structure, component of the eukaryotic translation initiation factor 3 (eIF-3) complex.

Its subcellular location is the cytoplasm. In terms of biological role, RNA-binding component of the eukaryotic translation initiation factor 3 (eIF-3) complex, which is involved in protein synthesis of a specialized repertoire of mRNAs and, together with other initiation factors, stimulates binding of mRNA and methionyl-tRNAi to the 40S ribosome. The eIF-3 complex specifically targets and initiates translation of a subset of mRNAs involved in cell proliferation. This is Eukaryotic translation initiation factor 3 subunit B (eif3B) from Dictyostelium discoideum (Social amoeba).